The sequence spans 294 residues: Cytidine deaminase (294 aa).

2 CMP/dCMP-type deaminase domains span residues 48–168 (DEDA…FGPK) and 186–294 (LTGD…VLLA). Substrate is bound at residue 89–91 (NME). Residue His102 participates in Zn(2+) binding. Glu104 serves as the catalytic Proton donor. Residues Cys129 and Cys132 each coordinate Zn(2+).

This sequence belongs to the cytidine and deoxycytidylate deaminase family. In terms of assembly, homodimer. It depends on Zn(2+) as a cofactor.

It catalyses the reaction cytidine + H2O + H(+) = uridine + NH4(+). The enzyme catalyses 2'-deoxycytidine + H2O + H(+) = 2'-deoxyuridine + NH4(+). This enzyme scavenges exogenous and endogenous cytidine and 2'-deoxycytidine for UMP synthesis. This Escherichia coli (strain ATCC 8739 / DSM 1576 / NBRC 3972 / NCIMB 8545 / WDCM 00012 / Crooks) protein is Cytidine deaminase.